A 460-amino-acid chain; its full sequence is ATP synthase subunit beta (460 aa).

150–157 provides a ligand contact to ATP; the sequence is GGAGVGKT.

Belongs to the ATPase alpha/beta chains family. F-type ATPases have 2 components, CF(1) - the catalytic core - and CF(0) - the membrane proton channel. CF(1) has five subunits: alpha(3), beta(3), gamma(1), delta(1), epsilon(1). CF(0) has three main subunits: a(1), b(2) and c(9-12). The alpha and beta chains form an alternating ring which encloses part of the gamma chain. CF(1) is attached to CF(0) by a central stalk formed by the gamma and epsilon chains, while a peripheral stalk is formed by the delta and b chains.

It localises to the cell inner membrane. It carries out the reaction ATP + H2O + 4 H(+)(in) = ADP + phosphate + 5 H(+)(out). Produces ATP from ADP in the presence of a proton gradient across the membrane. The catalytic sites are hosted primarily by the beta subunits. This chain is ATP synthase subunit beta, found in Salmonella gallinarum (strain 287/91 / NCTC 13346).